Consider the following 317-residue polypeptide: Transaldolase (317 aa).

K126 acts as the Schiff-base intermediate with substrate in catalysis.

This sequence belongs to the transaldolase family. Type 1 subfamily. In terms of assembly, homodimer.

Its subcellular location is the cytoplasm. It carries out the reaction D-sedoheptulose 7-phosphate + D-glyceraldehyde 3-phosphate = D-erythrose 4-phosphate + beta-D-fructose 6-phosphate. Its pathway is carbohydrate degradation; pentose phosphate pathway; D-glyceraldehyde 3-phosphate and beta-D-fructose 6-phosphate from D-ribose 5-phosphate and D-xylulose 5-phosphate (non-oxidative stage): step 2/3. Functionally, transaldolase is important for the balance of metabolites in the pentose-phosphate pathway. This chain is Transaldolase, found in Burkholderia lata (strain ATCC 17760 / DSM 23089 / LMG 22485 / NCIMB 9086 / R18194 / 383).